The primary structure comprises 382 residues: Cell division protein DivIB (382 aa).

Residues 1 to 103 (MAKDKEKQSD…SATQIAFQKS (103 aa)) are Cytoplasmic-facing. Basic and acidic residues-rich tracts occupy residues 36–49 (EKKL…DKKA) and 60–70 (VELKTDEKTDS). The interval 36 to 92 (EKKLKEKLLSDKKAQQQAQNASEAVELKTDEKTDSQEIESETTSKPKKTKKVRQPKE) is disordered. The helical transmembrane segment at 104–124 (LPVLLGALLLMAVSIFMITPY) threads the bilayer. The region spanning 125 to 196 (SKKKEFSVRG…NHFLFNVIEF (72 aa)) is the POTRA domain. At 125–382 (SKKKEFSVRG…PETVLEQAHG (258 aa)) the chain is on the extracellular side. The interval 322–382 (QEIENQPEVP…PETVLEQAHG (61 aa)) is disordered. Positions 338-352 (AADKEGDKPGEHQEQ) are enriched in basic and acidic residues.

The protein belongs to the FtsQ/DivIB family. DivIB subfamily.

It is found in the cell membrane. Cell division protein that may be involved in stabilizing or promoting the assembly of the division complex. This Streptococcus pyogenes serotype M2 (strain MGAS10270) protein is Cell division protein DivIB.